The following is a 1012-amino-acid chain: Structural polyprotein (1012 aa).

A divalent metal cation is bound at residue aspartate 30. One can recognise a Peptidase S50 domain in the interval 513–755 (ADKGYEVVAN…AGRQYHLAMA (243 aa)). Residue serine 652 is the Nucleophile of the active site. Lysine 692 is an active-site residue. 2 disordered regions span residues 837–857 (GYGV…KDTR) and 968–1012 (TAME…EDLE). Residues 975-986 (RNPRRAPPKPKP) are compositionally biased toward basic residues. The segment at 1003-1012 (IRTVSDEDLE) is interaction with VP1 protein.

In terms of assembly, homotrimer. A central divalent metal stabilizes the VP2 trimer. Interacts with host ITGA4/ITGB1. Homodimer. Interacts (via C-terminus) with VP1 in the cytoplasm. Interacts with VP2. In terms of processing, specific enzymatic cleavages yield mature proteins. The capsid assembly seems to be regulated by polyprotein processing. The protease VP4 cleaves itself off the polyprotein, thus releasing pre-VP2 and VP3 within the infected cell. During capsid assembly, the C-terminus of pre-VP2 is further processed by VP4, giving rise to VP2, the external capsid protein and three small peptides that all stay closely associated with the capsid.

It localises to the virion. It is found in the host cytoplasm. Its function is as follows. Capsid protein VP2 self assembles to form an icosahedral capsid with a T=13 symmetry, about 70 nm in diameter, and consisting of 260 VP2 trimers. The capsid encapsulates the genomic dsRNA. VP2 is also involved in attachment and entry into the host cell by interacting with host ITGA4/ITGB1. The precursor of VP2 plays an important role in capsid assembly. First, pre-VP2 and VP2 oligomers assemble to form a procapsid. Then, the pre-VP2 intermediates may be processed into VP2 proteins by proteolytic cleavage mediated by VP4 to obtain the mature virion. The final capsid is composed of pentamers and hexamers but VP2 has a natural tendency to assemble into all-pentameric structures. Therefore pre-VP2 may be required to allow formation of the hexameric structures. In terms of biological role, protease VP4 is a serine protease that cleaves the polyprotein into its final products. Pre-VP2 is first partially cleaved, and may be completely processed by VP4 upon capsid maturation. Functionally, capsid protein VP3 plays a key role in virion assembly by providing a scaffold for the capsid made of VP2. May self-assemble to form a T=4-like icosahedral inner-capsid composed of at least 180 trimers. Plays a role in genomic RNA packaging by recruiting VP1 into the capsid and interacting with the dsRNA genome segments to form a ribonucleoprotein complex. Additionally, the interaction of the VP3 C-terminal tail with VP1 removes the inherent structural blockade of the polymerase active site. Thus, VP3 can also function as a transcriptional activator. Its function is as follows. Structural peptide 1 is a small peptide derived from pre-VP2 C-terminus. It destabilizes and perforates cell membranes, suggesting a role during entry. Structural peptide 2 is a small peptide derived from pVP2 C-terminus. It is not essential for the virus viability, but viral growth is affected when missing. In terms of biological role, structural peptide 3 is a small peptide derived from pVP2 C-terminus. It is not essential for the virus viability, but viral growth is affected when missing. Functionally, structural peptide 4 is a small peptide derived from pVP2 C-terminus. It is essential for the virus viability. The polypeptide is Structural polyprotein (Gallus gallus (Chicken)).